A 695-amino-acid chain; its full sequence is ATP-dependent DNA helicase II subunit 2 (695 aa).

One can recognise a Ku domain in the interval 229–461 (FSIGNRDSKD…IDFAVSNYID (233 aa)).

Belongs to the ku80 family. Heterodimer of pku70 and pku80.

It is found in the nucleus. The protein localises to the chromosome. It localises to the telomere. It catalyses the reaction ATP + H2O = ADP + phosphate + H(+). In terms of biological role, single-stranded DNA-dependent ATP-dependent helicase. Involved in non-homologous end joining (NHEJ) DNA double strand break repair. DNA-binding is sequence-independent but has a high affinity to nicks in double-stranded DNA and to the ends of duplex DNA. Binds to naturally occurring chromosomal ends, and therefore provides chromosomal end protection. Required also for telomere recombination to repair telomeric ends in the absence of telomerase. ku70, of the ku70/ku80 heterodimer, binds to the stem loop of tlc1, the RNA component of telomerase. Involved in telomere maintenance. Interacts with telomeric repeats and subtelomeric sequences thereby controlling telomere length and protecting against subtelomeric rearrangement. Required for mating-type switching. This chain is ATP-dependent DNA helicase II subunit 2 (pku80), found in Schizosaccharomyces pombe (strain 972 / ATCC 24843) (Fission yeast).